We begin with the raw amino-acid sequence, 347 residues long: CCN family member 2 (347 aa).

The N-terminal stretch at 1 to 24 (MLASVAGPVSLALVLLLCTRPATG) is a signal peptide. Residues 25–96 (QDCSAQCQCA…NRKIGVCTAK (72 aa)) enclose the IGFBP N-terminal domain. 6 cysteine pairs are disulfide-bonded: cysteine 27-cysteine 52, cysteine 31-cysteine 54, cysteine 33-cysteine 55, cysteine 41-cysteine 58, cysteine 66-cysteine 80, and cysteine 72-cysteine 93. In terms of domain architecture, VWFC spans 99–165 (APCVFGGSVY…GKCCEEWVCD (67 aa)). The 46-residue stretch at 196–241 (NCLVQTTEWSACSKTCGMGISTRVTNDNTFCRLEKQSRLCMVRPCE) folds into the TSP type-1 domain. The heparin-binding stretch occupies residues 245–347 (EENIKKGKKC…YYRKMYGDMA (103 aa)). 5 disulfide bridges follow: cysteine 254–cysteine 291, cysteine 271–cysteine 305, cysteine 282–cysteine 321, cysteine 285–cysteine 323, and cysteine 290–cysteine 327. One can recognise a CTCK domain in the interval 254-328 (CIRTPKIAKP…KTCACHYNCP (75 aa)).

This sequence belongs to the CCN family. Monomer. Interacts with TSKU.

It is found in the secreted. Its subcellular location is the extracellular space. The protein localises to the extracellular matrix. Major connective tissue mitoattractant secreted by vascular endothelial cells. Promotes proliferation and differentiation of chondrocytes. Is involved in the stimulation of osteoblast differentiation and has a critical role in osteogenesis. Mediates heparin- and divalent cation-dependent cell adhesion in many cell types including fibroblasts, myofibroblasts, endothelial and epithelial cells. Enhances fibroblast growth factor-induced DNA synthesis. This chain is CCN family member 2, found in Rattus norvegicus (Rat).